Here is a 90-residue protein sequence, read N- to C-terminus: Putative membrane protein insertion efficiency factor (90 aa).

This sequence belongs to the UPF0161 family.

It localises to the cell membrane. Its function is as follows. Could be involved in insertion of integral membrane proteins into the membrane. The chain is Putative membrane protein insertion efficiency factor from Oceanobacillus iheyensis (strain DSM 14371 / CIP 107618 / JCM 11309 / KCTC 3954 / HTE831).